The chain runs to 487 residues: Probable glycine dehydrogenase (decarboxylating) subunit 2 (487 aa).

An N6-(pyridoxal phosphate)lysine modification is found at Lys273.

Belongs to the GcvP family. C-terminal subunit subfamily. The glycine cleavage system is composed of four proteins: P, T, L and H. In this organism, the P 'protein' is a heterodimer of two subunits. Requires pyridoxal 5'-phosphate as cofactor.

It catalyses the reaction N(6)-[(R)-lipoyl]-L-lysyl-[glycine-cleavage complex H protein] + glycine + H(+) = N(6)-[(R)-S(8)-aminomethyldihydrolipoyl]-L-lysyl-[glycine-cleavage complex H protein] + CO2. Its function is as follows. The glycine cleavage system catalyzes the degradation of glycine. The P protein binds the alpha-amino group of glycine through its pyridoxal phosphate cofactor; CO(2) is released and the remaining methylamine moiety is then transferred to the lipoamide cofactor of the H protein. This is Probable glycine dehydrogenase (decarboxylating) subunit 2 from Lysinibacillus sphaericus (strain C3-41).